Consider the following 303-residue polypeptide: Acetyl-coenzyme A carboxylase carboxyl transferase subunit beta (303 aa).

The region spanning 25–294 (LWIKCPETGE…NDVSAKSLNG (270 aa)) is the CoA carboxyltransferase N-terminal domain.

This sequence belongs to the AccD/PCCB family. In terms of assembly, acetyl-CoA carboxylase is a heterohexamer composed of biotin carboxyl carrier protein (AccB), biotin carboxylase (AccC) and two subunits each of ACCase subunit alpha (AccA) and ACCase subunit beta (AccD).

It is found in the cytoplasm. It catalyses the reaction N(6)-carboxybiotinyl-L-lysyl-[protein] + acetyl-CoA = N(6)-biotinyl-L-lysyl-[protein] + malonyl-CoA. The protein operates within lipid metabolism; malonyl-CoA biosynthesis; malonyl-CoA from acetyl-CoA: step 1/1. Component of the acetyl coenzyme A carboxylase (ACC) complex. Biotin carboxylase (BC) catalyzes the carboxylation of biotin on its carrier protein (BCCP) and then the CO(2) group is transferred by the transcarboxylase to acetyl-CoA to form malonyl-CoA. The chain is Acetyl-coenzyme A carboxylase carboxyl transferase subunit beta from Rhizobium rhizogenes (strain K84 / ATCC BAA-868) (Agrobacterium radiobacter).